Consider the following 196-residue polypeptide: Small ribosomal subunit protein uS4c (196 aa).

The segment at L15 to L36 is disordered. Residues M89–N150 form the S4 RNA-binding domain.

The protein belongs to the universal ribosomal protein uS4 family. As to quaternary structure, part of the 30S ribosomal subunit. Contacts protein S5. The interaction surface between S4 and S5 is involved in control of translational fidelity.

It localises to the plastid. The protein resides in the chloroplast. In terms of biological role, one of the primary rRNA binding proteins, it binds directly to 16S rRNA where it nucleates assembly of the body of the 30S subunit. Functionally, with S5 and S12 plays an important role in translational accuracy. The sequence is that of Small ribosomal subunit protein uS4c (rps4) from Yucca filamentosa (Bear-grass).